Consider the following 322-residue polypeptide: Putative MgpC-like protein MPN_367 (322 aa).

Low complexity predominate over residues methionine 1–asparagine 48. Disordered regions lie at residues methionine 1–serine 59 and aspartate 118–leucine 145. Positions threonine 120–glycine 134 are enriched in polar residues.

The protein belongs to the MgpC family.

This is Putative MgpC-like protein MPN_367 from Mycoplasma pneumoniae (strain ATCC 29342 / M129 / Subtype 1) (Mycoplasmoides pneumoniae).